The following is a 464-amino-acid chain: UNC93-like protein 3 (464 aa).

11 helical membrane-spanning segments follow: residues 31–51 (VHIL…AQNL), 62–82 (ISLG…SLVV), 84–104 (LMGS…FVAA), 110–130 (WFTM…IWVG), 160–180 (EFWA…LALL), 192–212 (TLLM…MFFI), 251–271 (LLIV…WAEF), 275–295 (IVTP…YGAL), 313–333 (ITFI…WLLL), 341–361 (VLGT…DGIL), and 392–412 (IAIV…IVML).

This sequence belongs to the unc-93 family.

The protein localises to the membrane. This Arabidopsis thaliana (Mouse-ear cress) protein is UNC93-like protein 3.